We begin with the raw amino-acid sequence, 353 residues long: MTATLERRESSNLWGRFCDWVTSTENRLYIGWFGVLMIPTLLTATSVFIIAFIAAPPVDIDGIREPVSGSLLYGNNIISGAIVPTSAAIGLHFYPIWEAASLDEWLYNGGPYEMIVLHFLLGVACYMGREWELSFRLGMRPWIAVAYSAPVAAATAVFLIYPIGQGSFSDGMPLGISGTFNFMIVFQAEHNILMHPFHMLGVAGVFGGSLFSAMHGSLVTSSLIRETTENESANAGYKFGQEEETYNIVAAHGYFGRLIFQYASFNNSRSLHFFLAAWPVVGIWFTALGISTMAFNLNGFNFNQSVVDSQGRVINTWADIINRANLGMEVMHERNAHNFPLDLASVEAPSINA.

Threonine 2 carries the N-acetylthreonine modification. Threonine 2 is subject to Phosphothreonine. Helical transmembrane passes span 29-46 (YIGW…TATS), 118-133 (HFLL…EWEL), and 142-156 (WIAV…AATA). A chlorophyll a-binding site is contributed by histidine 118. Tyrosine 126 is a pheophytin a binding site. Residues aspartate 170 and glutamate 189 each contribute to the [CaMn4O5] cluster site. A helical transmembrane segment spans residues 197–218 (FHMLGVAGVFGGSLFSAMHGSL). Chlorophyll a is bound at residue histidine 198. A quinone contacts are provided by residues histidine 215 and 264–265 (SF). Histidine 215 is a Fe cation binding site. Histidine 272 provides a ligand contact to Fe cation. A helical membrane pass occupies residues 274–288 (FLAAWPVVGIWFTAL). 4 residues coordinate [CaMn4O5] cluster: histidine 332, glutamate 333, aspartate 342, and alanine 344. Residues 345-353 (SVEAPSINA) constitute a propeptide that is removed on maturation.

This sequence belongs to the reaction center PufL/M/PsbA/D family. As to quaternary structure, PSII is composed of 1 copy each of membrane proteins PsbA, PsbB, PsbC, PsbD, PsbE, PsbF, PsbH, PsbI, PsbJ, PsbK, PsbL, PsbM, PsbT, PsbX, PsbY, PsbZ, Psb30/Ycf12, at least 3 peripheral proteins of the oxygen-evolving complex and a large number of cofactors. It forms dimeric complexes. The cofactor is The D1/D2 heterodimer binds P680, chlorophylls that are the primary electron donor of PSII, and subsequent electron acceptors. It shares a non-heme iron and each subunit binds pheophytin, quinone, additional chlorophylls, carotenoids and lipids. D1 provides most of the ligands for the Mn4-Ca-O5 cluster of the oxygen-evolving complex (OEC). There is also a Cl(-1) ion associated with D1 and D2, which is required for oxygen evolution. The PSII complex binds additional chlorophylls, carotenoids and specific lipids.. In terms of processing, tyr-161 forms a radical intermediate that is referred to as redox-active TyrZ, YZ or Y-Z. C-terminally processed by CTPA; processing is essential to allow assembly of the oxygen-evolving complex and thus photosynthetic growth.

The protein localises to the plastid. The protein resides in the chloroplast thylakoid membrane. It carries out the reaction 2 a plastoquinone + 4 hnu + 2 H2O = 2 a plastoquinol + O2. Its function is as follows. Photosystem II (PSII) is a light-driven water:plastoquinone oxidoreductase that uses light energy to abstract electrons from H(2)O, generating O(2) and a proton gradient subsequently used for ATP formation. It consists of a core antenna complex that captures photons, and an electron transfer chain that converts photonic excitation into a charge separation. The D1/D2 (PsbA/PsbD) reaction center heterodimer binds P680, the primary electron donor of PSII as well as several subsequent electron acceptors. This chain is Photosystem II protein D1, found in Chara vulgaris (Common stonewort).